A 902-amino-acid polypeptide reads, in one-letter code: Potassium/sodium hyperpolarization-activated cyclic nucleotide-gated channel 1 (902 aa).

The disordered stretch occupies residues 1–75 (MEGGGKPNSA…PAGSFEDAEG (75 aa)). Residues 1 to 131 (MEGGGKPNSA…WIIHPYSDFR (131 aa)) lie on the Cytoplasmic side of the membrane. The chain crosses the membrane as a helical span at residues 132-153 (FYWDLIMLIMMVGNLVIIPVGI). At 154 to 162 (TFFTEQTTT) the chain is on the extracellular side. The helical transmembrane segment at 163–183 (PWIIFNVASDTVFLLDLIMNF) threads the bilayer. At 184 to 204 (RTGTVNEDSSEIILDPKVIKM) the chain is on the cytoplasmic side. The helical transmembrane segment at 205–225 (NYLKSWFVVDFISSIPVDYIF) threads the bilayer. The Extracellular segment spans residues 226 to 249 (LIVEKGMDSEVYKTARALRIVRFT). Residues 250 to 270 (KILSLLRLLRLSRLIRYIHQW) traverse the membrane as a helical; Voltage-sensor segment. At 271 to 284 (EEIFHMTYDLASAV) the chain is on the cytoplasmic side. Residues 285-307 (VRIFNLIGMMLLLCHWDGCLQFL) form a helical membrane-spanning segment. The Extracellular segment spans residues 308-333 (VPLLQDFPPDCWVSLNEMVNDSWGKQ). N-linked (GlcNAc...) asparagine glycosylation occurs at N327. The pore-forming intramembrane region spans 334-355 (YSYALFKAMSHMLCIGYGAQAP). Positions 347 to 351 (CIGYG) match the Selectivity filter motif. Residues 356 to 360 (VSMSD) are Extracellular-facing. A helical transmembrane segment spans residues 361 to 381 (LWITMLSMIVGATCYAMFVGH). At 382–902 (ATALIQSLDS…AEKPRFASNL (521 aa)) the chain is on the cytoplasmic side. 3',5'-cyclic AMP contacts are provided by G528, E529, C531, R538, T539, R579, and R582. 3 disordered regions span residues 634–681 (TALN…QPSA), 713–824 (ASQL…VGES), and 858–902 (MSSG…ASNL). Low complexity-rich tracts occupy residues 639–680 (TSST…PQPS), 720–736 (QQPQPQLQQSQVQQTQP), and 744–769 (QPQQQQQQQQQQQQQQQQQQQQQQPQ). Positions 770–793 (TPGSSTPKNEVHKSTQALHNTNLT) are enriched in polar residues. Positions 867 to 877 (RGVPPAPPPPA) are enriched in pro residues. Basic and acidic residues predominate over residues 889–902 (KDPDAEKPRFASNL).

It belongs to the potassium channel HCN family. In terms of assembly, homotetramer. Heterotetramer with HCN2. The potassium channel is composed of a homo- or heterotetrameric complex of pore-forming subunits. Interacts with KCNE2. Interacts with the SH3 domain of CSK. Highly expressed in cerebral cortex, cerebellum, throughout the hippocampus, in medial habenula, anterior dorsal nucleus in the thalamus, tenia tecta, several nuclei of the general motor system and in optic nerve layer. Detected in a subset of elongated cells in taste buds.

The protein resides in the cell membrane. It carries out the reaction Na(+)(in) = Na(+)(out). It catalyses the reaction K(+)(in) = K(+)(out). Activated by cAMP, and at 10-100 times higher concentrations, also by cGMP. cAMP binding promotes tetramerization and formation of an active channel. Compared to other family members, cAMP has less stimulatory effect on HCN1 because part of the molecules already contain bound cAMP and form homotetramers when cAMP levels are low, this inherent tetramerization in HCN1 results in a weaker response to increased cAMP. Its function is as follows. Hyperpolarization-activated ion channel that are permeable to sodium and potassium ions. Exhibits weak selectivity for potassium over sodium ions. Contributes to the native pacemaker currents in heart (If) and in neurons (Ih). Participates in cerebellar mechanisms of motor learning. May mediate responses to sour stimuli. This is Potassium/sodium hyperpolarization-activated cyclic nucleotide-gated channel 1 (Hcn1) from Rattus norvegicus (Rat).